The primary structure comprises 252 residues: Ubiquinone biosynthesis O-methyltransferase (252 aa).

4 residues coordinate S-adenosyl-L-methionine: R51, G70, D91, and M136.

It belongs to the methyltransferase superfamily. UbiG/COQ3 family.

It carries out the reaction a 3-demethylubiquinol + S-adenosyl-L-methionine = a ubiquinol + S-adenosyl-L-homocysteine + H(+). It catalyses the reaction a 3-(all-trans-polyprenyl)benzene-1,2-diol + S-adenosyl-L-methionine = a 2-methoxy-6-(all-trans-polyprenyl)phenol + S-adenosyl-L-homocysteine + H(+). The protein operates within cofactor biosynthesis; ubiquinone biosynthesis. O-methyltransferase that catalyzes the 2 O-methylation steps in the ubiquinone biosynthetic pathway. The chain is Ubiquinone biosynthesis O-methyltransferase from Albidiferax ferrireducens (strain ATCC BAA-621 / DSM 15236 / T118) (Rhodoferax ferrireducens).